A 329-amino-acid chain; its full sequence is Alpha/beta hydrolase domain-containing protein 17C (329 aa).

Residues Gly53 to Gly79 show a composition bias toward low complexity. A disordered region spans residues Gly53–Gly85. Active-site charge relay system residues include Ser211, Asp276, and His305.

This sequence belongs to the AB hydrolase superfamily. ABHD17 family. Post-translationally, palmitoylated on cysteine residues located in a cysteine cluster at the N-terminus which promotes membrane localization. Palmitoylation is required for post-synaptic localization and for depalmitoylating activity towards DLG4/PSD95.

The protein resides in the recycling endosome membrane. The protein localises to the cell projection. Its subcellular location is the dendritic spine. It localises to the postsynaptic density membrane. The catalysed reaction is S-hexadecanoyl-L-cysteinyl-[protein] + H2O = L-cysteinyl-[protein] + hexadecanoate + H(+). Inhibited by palmostatin-B. Its function is as follows. Hydrolyzes fatty acids from S-acylated cysteine residues in proteins. Has depalmitoylating activity towards NRAS and DLG4/PSD95. The sequence is that of Alpha/beta hydrolase domain-containing protein 17C from Homo sapiens (Human).